A 384-amino-acid polypeptide reads, in one-letter code: O-phospho-L-seryl-tRNA:Cys-tRNA synthase 1 (384 aa).

Residues 88–89 (AR), Asn-195, and 218–220 (SGH) each bind pyridoxal 5'-phosphate. Lys-221 carries the post-translational modification N6-(pyridoxal phosphate)lysine.

The protein belongs to the SepCysS family. In terms of assembly, homodimer. Interacts with SepRS. Requires pyridoxal 5'-phosphate as cofactor.

The enzyme catalyses O-phospho-L-seryl-tRNA(Cys) + hydrogen sulfide + H(+) = L-cysteinyl-tRNA(Cys) + phosphate. Functionally, converts O-phospho-L-seryl-tRNA(Cys) (Sep-tRNA(Cys)) to L-cysteinyl-tRNA(Cys) (Cys-tRNA(Cys)). The sequence is that of O-phospho-L-seryl-tRNA:Cys-tRNA synthase 1 from Methanocella arvoryzae (strain DSM 22066 / NBRC 105507 / MRE50).